A 137-amino-acid chain; its full sequence is Methylglyoxal synthase (137 aa).

Residues 1–137 enclose the MGS-like domain; it reads MKIALIAHDR…NIVHGRDRDA (137 aa). Substrate is bound by residues H8, K12, 34 to 37, and 54 to 55; these read TGTT and SG. The active-site Proton donor/acceptor is D60. H87 is a substrate binding site.

Belongs to the methylglyoxal synthase family.

It catalyses the reaction dihydroxyacetone phosphate = methylglyoxal + phosphate. Catalyzes the formation of methylglyoxal from dihydroxyacetone phosphate. The polypeptide is Methylglyoxal synthase (Bacillus licheniformis (strain ATCC 14580 / DSM 13 / JCM 2505 / CCUG 7422 / NBRC 12200 / NCIMB 9375 / NCTC 10341 / NRRL NRS-1264 / Gibson 46)).